A 489-amino-acid polypeptide reads, in one-letter code: tRNA(Ile)-lysidine synthase (489 aa).

An ATP-binding site is contributed by Ser35–Ser40.

It belongs to the tRNA(Ile)-lysidine synthase family.

The protein resides in the cytoplasm. The enzyme catalyses cytidine(34) in tRNA(Ile2) + L-lysine + ATP = lysidine(34) in tRNA(Ile2) + AMP + diphosphate + H(+). In terms of biological role, ligates lysine onto the cytidine present at position 34 of the AUA codon-specific tRNA(Ile) that contains the anticodon CAU, in an ATP-dependent manner. Cytidine is converted to lysidine, thus changing the amino acid specificity of the tRNA from methionine to isoleucine. The sequence is that of tRNA(Ile)-lysidine synthase from Burkholderia pseudomallei (strain K96243).